The sequence spans 1210 residues: Disease resistance-like protein DSC2 (1210 aa).

The 165-residue stretch at 59–223 (WTHQVFPSFR…KVAKDVSDVL (165 aa)) folds into the TIR domain. Glu-134 is a catalytic residue. One can recognise an NB-ARC domain in the interval 241–511 (ITRINSLLCL…CLFNGCQVNH (271 aa)). LRR repeat units lie at residues 662 to 685 (AKFL…IQPL), 686 to 709 (KNLK…SNAT), 711 to 732 (LESL…IRGT), 756 to 780 (ATSL…LPGD), 783 to 804 (MRSL…PEIS), 805 to 828 (TNIQ…RLWS), 830 to 848 (LDKL…PPVP), 849 to 873 (DGIS…NLSQ), and 940 to 970 (LPEL…NLSQ).

The protein belongs to the disease resistance NB-LRR family. Interacts with DSC1.

The catalysed reaction is NAD(+) + H2O = ADP-D-ribose + nicotinamide + H(+). TIR-NB-LRR receptor-like protein involved in plant defense. Acts as a trigger of hypersensitive response (HR). Functions as a guard of CAMTA3, a negative regulator of immunity, during pathogen infection. The protein is Disease resistance-like protein DSC2 of Arabidopsis thaliana (Mouse-ear cress).